The sequence spans 310 residues: Malate dehydrogenase (310 aa).

NAD(+)-binding positions include 7–12 and Asp32; that span reads GAGNVG. Substrate-binding residues include Arg81 and Arg87. NAD(+) is bound by residues Asn94 and 117-119; that span reads VSN. Asn119 and Arg150 together coordinate substrate. His174 functions as the Proton acceptor in the catalytic mechanism.

This sequence belongs to the LDH/MDH superfamily. MDH type 3 family. Homotetramer; arranged as a dimer of dimers.

It catalyses the reaction (S)-malate + NAD(+) = oxaloacetate + NADH + H(+). Its function is as follows. Catalyzes the reversible oxidation of malate to oxaloacetate. In Prosthecochloris vibrioformis (Chlorobium vibrioforme), this protein is Malate dehydrogenase.